Consider the following 316-residue polypeptide: Olfactory receptor 52A5 (316 aa).

Topologically, residues Met1–Cys27 are extracellular. Residue Asn5 is glycosylated (N-linked (GlcNAc...) asparagine). Residues Trp28–Leu48 form a helical membrane-spanning segment. Topologically, residues Val49–Ser56 are cytoplasmic. A helical transmembrane segment spans residues Leu57–Thr77. Topologically, residues Cys78 to Phe101 are extracellular. A helical transmembrane segment spans residues Gln102–Leu122. The Cytoplasmic segment spans residues Asp123–Gln141. The helical transmembrane segment at Phe142 to Leu162 threads the bilayer. At Gly163–Lys199 the chain is on the extracellular side. Residues Ile200–Ser220 form a helical membrane-spanning segment. At Tyr221 to Ala240 the chain is on the cytoplasmic side. A helical transmembrane segment spans residues Phe241–Ser261. The Extracellular segment spans residues Phe262–His276. Residues Ile277–Val297 form a helical membrane-spanning segment. Topologically, residues Lys298–Thr316 are cytoplasmic.

The protein belongs to the G-protein coupled receptor 1 family.

Its subcellular location is the cell membrane. In terms of biological role, odorant receptor. The protein is Olfactory receptor 52A5 (OR52A5) of Homo sapiens (Human).